Reading from the N-terminus, the 346-residue chain is Phenylalanine--tRNA ligase alpha subunit (346 aa).

Position 262 (glutamate 262) interacts with Mg(2+).

Belongs to the class-II aminoacyl-tRNA synthetase family. Phe-tRNA synthetase alpha subunit type 1 subfamily. In terms of assembly, tetramer of two alpha and two beta subunits. It depends on Mg(2+) as a cofactor.

The protein localises to the cytoplasm. The enzyme catalyses tRNA(Phe) + L-phenylalanine + ATP = L-phenylalanyl-tRNA(Phe) + AMP + diphosphate + H(+). The chain is Phenylalanine--tRNA ligase alpha subunit from Ehrlichia chaffeensis (strain ATCC CRL-10679 / Arkansas).